Consider the following 235-residue polypeptide: Serine protease SplA (235 aa).

Residues 1-35 form the signal peptide; that stretch reads MNKNVMIKGLTALTILTSLGFAENISDQPHSIAKA. Catalysis depends on charge relay system residues histidine 74, aspartate 113, and serine 189.

Belongs to the peptidase S1B family.

It localises to the secreted. This is Serine protease SplA (splA) from Staphylococcus aureus.